The following is a 584-amino-acid chain: Proline--tRNA ligase (584 aa).

Positions 242–261 (APPASNPEERPATQVHDTPD) are disordered.

Belongs to the class-II aminoacyl-tRNA synthetase family. ProS type 1 subfamily. In terms of assembly, homodimer.

The protein localises to the cytoplasm. It carries out the reaction tRNA(Pro) + L-proline + ATP = L-prolyl-tRNA(Pro) + AMP + diphosphate. Its function is as follows. Catalyzes the attachment of proline to tRNA(Pro) in a two-step reaction: proline is first activated by ATP to form Pro-AMP and then transferred to the acceptor end of tRNA(Pro). As ProRS can inadvertently accommodate and process non-cognate amino acids such as alanine and cysteine, to avoid such errors it has two additional distinct editing activities against alanine. One activity is designated as 'pretransfer' editing and involves the tRNA(Pro)-independent hydrolysis of activated Ala-AMP. The other activity is designated 'posttransfer' editing and involves deacylation of mischarged Ala-tRNA(Pro). The misacylated Cys-tRNA(Pro) is not edited by ProRS. This Salinispora arenicola (strain CNS-205) protein is Proline--tRNA ligase.